The sequence spans 352 residues: MDYQVSSPTYDIDYYTSEPCQKINVKQIAGRLLPPLYSLVFIFGFVGNILVVLILINCKRLKSMTDIYLLNLAISDLLFLLTVPFWAHYAAAQWDFGNTMCQLLTGLYFIGFFSGIFFIILLTIDRYLAIVHAVFALKARTVTFGVVTSVITWVVAVFASLPGIIFTRSQREGLHYTCSSHFPYSQYQFWKNFQTLKIVILGLVLPLLVMVICYSGILKTLLRCRNEKKRHRAVRLIFTIMIVYFLFWAPYNIVLLLNTFQEFFGLNNCSSSNRLDQAMQVTETLGMTHCCINPIIYAFVGEKFRNYLLVFFQKHIAKRFCKCCSIFQQEAPERASSVYTRSTGEQEISVGL.

The Extracellular segment spans residues 1-30; the sequence is MDYQVSSPTYDIDYYTSEPCQKINVKQIAG. Y3 is subject to Sulfotyrosine. Residues S6 and S7 are each glycosylated (O-linked (GalNAc...) serine). Residues Y10, Y14, and Y15 each carry the sulfotyrosine modification. Intrachain disulfides connect C20–C269 and C101–C178. A helical membrane pass occupies residues 31 to 58; sequence RLLPPLYSLVFIFGFVGNILVVLILINC. Topologically, residues 59–68 are cytoplasmic; sequence KRLKSMTDIY. Residues 69 to 89 traverse the membrane as a helical segment; the sequence is LLNLAISDLLFLLTVPFWAHY. At 90 to 102 the chain is on the extracellular side; it reads AAAQWDFGNTMCQ. The chain crosses the membrane as a helical span at residues 103–124; that stretch reads LLTGLYFIGFFSGIFFIILLTI. Over 125–141 the chain is Cytoplasmic; that stretch reads DRYLAIVHAVFALKART. A helical membrane pass occupies residues 142-166; it reads VTFGVVTSVITWVVAVFASLPGIIF. Over 167-198 the chain is Extracellular; it reads TRSQREGLHYTCSSHFPYSQYQFWKNFQTLKI. The helical transmembrane segment at 199–218 threads the bilayer; the sequence is VILGLVLPLLVMVICYSGIL. Over 219–235 the chain is Cytoplasmic; sequence KTLLRCRNEKKRHRAVR. The chain crosses the membrane as a helical span at residues 236-260; that stretch reads LIFTIMIVYFLFWAPYNIVLLLNTF. Over 261–277 the chain is Extracellular; it reads QEFFGLNNCSSSNRLDQ. The chain crosses the membrane as a helical span at residues 278–301; it reads AMQVTETLGMTHCCINPIIYAFVG. At 302-352 the chain is on the cytoplasmic side; it reads EKFRNYLLVFFQKHIAKRFCKCCSIFQQEAPERASSVYTRSTGEQEISVGL. 3 S-palmitoyl cysteine lipidation sites follow: C321, C323, and C324. A phosphoserine; by BARK1 mark is found at S336, S337, S342, and S349.

It belongs to the G-protein coupled receptor 1 family. Interacts with PRAF2. Efficient ligand binding to CCL3/MIP-1alpha and CCL4/MIP-1beta requires sulfation, O-glycosylation and sialic acid modifications. Glycosylation on Ser-6 is required for efficient binding of CCL4. Interacts with GRK2. Interacts with ARRB1 and ARRB2. Interacts with CNIH4. Interacts with S100A4; this interaction stimulates T-lymphocyte chemotaxis. Sulfated on at least 2 of the N-terminal tyrosines. Sulfation is required for efficient binding of the chemokines, CCL3 and CCL4. In terms of processing, palmitoylation in the C-terminal is important for cell surface expression. Post-translationally, phosphorylation on serine residues in the C-terminal is stimulated by binding CC chemokines especially by APO-RANTES. O-glycosylated, but not N-glycosylated. Ser-6 appears to be the major site even if Ser-7 may be also O-glycosylated. Also sialylated glycans present which contribute to chemokine binding. Thr-16 and Ser-17 may also be glycosylated and, if so, with small moieties such as a T-antigen.

It is found in the cell membrane. Receptor for a number of inflammatory CC-chemokines including CCL3/MIP-1-alpha, CCL4/MIP-1-beta and RANTES and subsequently transduces a signal by increasing the intracellular calcium ion level. May play a role in the control of granulocytic lineage proliferation or differentiation. Participates in T-lymphocyte migration to the infection site by acting as a chemotactic receptor. The polypeptide is C-C chemokine receptor type 5 (CCR5) (Theropithecus gelada (Gelada baboon)).